The primary structure comprises 964 residues: Glycine dehydrogenase (decarboxylating) (964 aa).

Lys-710 is modified (N6-(pyridoxal phosphate)lysine).

It belongs to the GcvP family. In terms of assembly, the glycine cleavage system is composed of four proteins: P, T, L and H. Pyridoxal 5'-phosphate serves as cofactor.

The catalysed reaction is N(6)-[(R)-lipoyl]-L-lysyl-[glycine-cleavage complex H protein] + glycine + H(+) = N(6)-[(R)-S(8)-aminomethyldihydrolipoyl]-L-lysyl-[glycine-cleavage complex H protein] + CO2. The glycine cleavage system catalyzes the degradation of glycine. The P protein binds the alpha-amino group of glycine through its pyridoxal phosphate cofactor; CO(2) is released and the remaining methylamine moiety is then transferred to the lipoamide cofactor of the H protein. The chain is Glycine dehydrogenase (decarboxylating) from Saccharophagus degradans (strain 2-40 / ATCC 43961 / DSM 17024).